The following is a 65-amino-acid chain: Large ribosomal subunit protein bL35 (65 aa).

It belongs to the bacterial ribosomal protein bL35 family.

This chain is Large ribosomal subunit protein bL35, found in Chlorobium phaeovibrioides (strain DSM 265 / 1930) (Prosthecochloris vibrioformis (strain DSM 265)).